A 373-amino-acid chain; its full sequence is Phosphoserine aminotransferase (373 aa).

Residue arginine 47 coordinates L-glutamate. Pyridoxal 5'-phosphate contacts are provided by residues 81 to 82 (AR), tryptophan 113, threonine 164, aspartate 185, and glutamine 208. An N6-(pyridoxal phosphate)lysine modification is found at lysine 209. 250–251 (NT) is a binding site for pyridoxal 5'-phosphate.

Belongs to the class-V pyridoxal-phosphate-dependent aminotransferase family. SerC subfamily. As to quaternary structure, homodimer. Pyridoxal 5'-phosphate serves as cofactor.

Its subcellular location is the cytoplasm. The enzyme catalyses O-phospho-L-serine + 2-oxoglutarate = 3-phosphooxypyruvate + L-glutamate. It catalyses the reaction 4-(phosphooxy)-L-threonine + 2-oxoglutarate = (R)-3-hydroxy-2-oxo-4-phosphooxybutanoate + L-glutamate. It participates in amino-acid biosynthesis; L-serine biosynthesis; L-serine from 3-phospho-D-glycerate: step 2/3. The protein operates within cofactor biosynthesis; pyridoxine 5'-phosphate biosynthesis; pyridoxine 5'-phosphate from D-erythrose 4-phosphate: step 3/5. In terms of biological role, catalyzes the reversible conversion of 3-phosphohydroxypyruvate to phosphoserine and of 3-hydroxy-2-oxo-4-phosphonooxybutanoate to phosphohydroxythreonine. This Buchnera aphidicola subsp. Baizongia pistaciae (strain Bp) protein is Phosphoserine aminotransferase.